Here is a 307-residue protein sequence, read N- to C-terminus: Protoheme IX farnesyltransferase (307 aa).

Helical transmembrane passes span 31–51 (VTQLAVFCAIIGMFLATPGMV), 55–75 (VLIGGAAGIWLLAGAAFAINC), 103–123 (TLVFSAILGGAGMWLLHVYAN), 125–145 (LTMWLTFATFLGYAVVYTILL), 153–173 (IVIGGLSGAMPPALGWAAVAG), 179–199 (AWFLVLIIFTWTPPHFWALAL), 223–243 (LLHILLYTLIMIAATLLPFVY), 246–266 (SGYIYLAAALALGAGFLAYAW), and 285–305 (ILYLSLLFAALLVDHYFKFVP).

It belongs to the UbiA prenyltransferase family. Protoheme IX farnesyltransferase subfamily.

It is found in the cell inner membrane. The enzyme catalyses heme b + (2E,6E)-farnesyl diphosphate + H2O = Fe(II)-heme o + diphosphate. It functions in the pathway porphyrin-containing compound metabolism; heme O biosynthesis; heme O from protoheme: step 1/1. Its function is as follows. Converts heme B (protoheme IX) to heme O by substitution of the vinyl group on carbon 2 of heme B porphyrin ring with a hydroxyethyl farnesyl side group. The protein is Protoheme IX farnesyltransferase of Cupriavidus necator (strain ATCC 17699 / DSM 428 / KCTC 22496 / NCIMB 10442 / H16 / Stanier 337) (Ralstonia eutropha).